The chain runs to 508 residues: Photosystem II CP47 reaction center protein (508 aa).

6 helical membrane passes run Ser-21–Ser-36, Ile-101–Trp-115, Gly-140–Phe-156, Ile-203–Ser-218, Val-237–Val-252, and Ser-457–Arg-472.

This sequence belongs to the PsbB/PsbC family. PsbB subfamily. As to quaternary structure, PSII is composed of 1 copy each of membrane proteins PsbA, PsbB, PsbC, PsbD, PsbE, PsbF, PsbH, PsbI, PsbJ, PsbK, PsbL, PsbM, PsbT, PsbX, PsbY, PsbZ, Psb30/Ycf12, at least 3 peripheral proteins of the oxygen-evolving complex and a large number of cofactors. It forms dimeric complexes. Requires Binds multiple chlorophylls. PSII binds additional chlorophylls, carotenoids and specific lipids. as cofactor.

It is found in the plastid. Its subcellular location is the chloroplast thylakoid membrane. One of the components of the core complex of photosystem II (PSII). It binds chlorophyll and helps catalyze the primary light-induced photochemical processes of PSII. PSII is a light-driven water:plastoquinone oxidoreductase, using light energy to abstract electrons from H(2)O, generating O(2) and a proton gradient subsequently used for ATP formation. The sequence is that of Photosystem II CP47 reaction center protein from Morus indica (Mulberry).